The following is a 498-amino-acid chain: Ribose import ATP-binding protein RbsA 1 (498 aa).

ABC transporter domains follow at residues 7–243 and 254–496; these read LHIQ…VGRR and PRGE…IGKS. 39–46 is a binding site for ATP; it reads GENGAGKS.

Belongs to the ABC transporter superfamily. Ribose importer (TC 3.A.1.2.1) family. As to quaternary structure, the complex is composed of an ATP-binding protein (RbsA), two transmembrane proteins (RbsC) and a solute-binding protein (RbsB).

Its subcellular location is the cell inner membrane. It catalyses the reaction D-ribose(out) + ATP + H2O = D-ribose(in) + ADP + phosphate + H(+). Its function is as follows. Part of the ABC transporter complex RbsABC involved in ribose import. Responsible for energy coupling to the transport system. The sequence is that of Ribose import ATP-binding protein RbsA 1 from Pasteurella multocida (strain Pm70).